The primary structure comprises 136 residues: Large ribosomal subunit protein bL21 (136 aa).

The span at 1 to 21 (MSETPSKAKASKPAESKAQAS) shows a compositional bias: low complexity. The segment at 1–25 (MSETPSKAKASKPAESKAQASDSSG) is disordered.

This sequence belongs to the bacterial ribosomal protein bL21 family. As to quaternary structure, part of the 50S ribosomal subunit. Contacts protein L20.

Functionally, this protein binds to 23S rRNA in the presence of protein L20. In Synechococcus sp. (strain RCC307), this protein is Large ribosomal subunit protein bL21.